The chain runs to 472 residues: Divinyl ether synthase CYP74 (472 aa).

A heme-binding site is contributed by Cys425.

Belongs to the cytochrome P450 family. Requires heme as cofactor. Expressed mainly in bulbs, and at lower levels in roots.

The catalysed reaction is (13S)-hydroperoxy-(9Z,11E)-octadecadienoate = etheroleate + H2O. The enzyme catalyses (13S)-hydroperoxy-(9Z,11E,15Z)-octadecatrienoate = etherolenate + H2O. It catalyses the reaction (9S)-hydroperoxy-(10E,12Z)-octadecadienoate = colneleate + H2O. It carries out the reaction (9S)-hydroperoxy-(10E,12Z,15Z)-octadecatrienoate = colnelenate + H2O. Its pathway is lipid metabolism; oxylipin biosynthesis. In terms of biological role, divinyl ether synthase involved in oxylipin biosynthesis. Catalyzes the conversion of (13S)-hydroperoxy-(9Z,11E)-octadecadienoate (13-HPOD) to etheroleate and (13S)-hydroperoxy-(9Z,11E,15Z)-octadecatrienoate (13-HPOT) to etherolenate. Catalyzes the conversion of (9S)-hydroperoxy-(10E,12Z)-octadecadienoate (9-HPOD) to colneleate and (9S)-hydroperoxy-(10E,12Z,15Z)-octadecatrienoate (9-HPOT) colnelenate. The protein is Divinyl ether synthase CYP74 of Allium sativum (Garlic).